A 54-amino-acid polypeptide reads, in one-letter code: Large ribosomal subunit protein bL33B (54 aa).

The protein belongs to the bacterial ribosomal protein bL33 family.

The chain is Large ribosomal subunit protein bL33B from Mycobacterium sp. (strain JLS).